A 1639-amino-acid chain; its full sequence is RIMS-binding protein 3A (1639 aa).

Disordered stretches follow at residues 1–22 (MAKD…SSPA), 215–240 (GSPD…CHAP), and 295–364 (SLDS…LTPS). Residues 21-143 (PAAAVLENQR…ELQRQLAEEL (123 aa)) adopt a coiled-coil conformation. A compositionally biased stretch (pro residues) spans 326 to 339 (SPPPSPLPPPPPPS). Coiled-coil stretches lie at residues 409–442 (QADE…QETN) and 480–619 (LAKD…AEEN). A disordered region spans residues 697-811 (CRPGHPPEQP…DRDTASEVDD (115 aa)). 2 stretches are compositionally biased toward polar residues: residues 707-718 (WETSQMPESQVK) and 761-775 (SVPQ…SQPL). Positions 776 to 790 (SKKTSSQSNSSSEGS) are enriched in low complexity. Residues 832-899 (PKLKIFMAQY…PSNFVEQIPD (68 aa)) enclose the SH3 1 domain. Fibronectin type-III domains lie at 995 to 1083 (APMQ…TLLA) and 1088 to 1184 (PPLD…IPED). 2 disordered regions span residues 1251-1273 (PRRQ…GAGS) and 1292-1330 (QKSP…FIHL). Polar residues predominate over residues 1293-1305 (KSPQNHRPPSVSD). SH3 domains are found at residues 1452 to 1520 (TPAR…EMEV) and 1569 to 1636 (WTPK…HMSL).

Belongs to the RIMBP family. Interacts with LRGUK (via guanylate kinase-like domain). Interacts (via C-terminus) with HOOK1 (via coiled-coil region).

The protein resides in the cytoplasm. It localises to the cytoskeleton. Probable component of the manchette, a microtubule-based structure which plays a key role in sperm head morphogenesis during late stages of sperm development. This Homo sapiens (Human) protein is RIMS-binding protein 3A (RIMBP3).